The following is a 279-amino-acid chain: Acyl-[acyl-carrier-protein]--UDP-N-acetylglucosamine O-acyltransferase (279 aa).

Positions 256-279 (IERGADKDALQDESVEKEGALVES) are disordered.

The protein belongs to the transferase hexapeptide repeat family. LpxA subfamily. In terms of assembly, homotrimer.

Its subcellular location is the cytoplasm. It carries out the reaction a (3R)-hydroxyacyl-[ACP] + UDP-N-acetyl-alpha-D-glucosamine = a UDP-3-O-[(3R)-3-hydroxyacyl]-N-acetyl-alpha-D-glucosamine + holo-[ACP]. The protein operates within glycolipid biosynthesis; lipid IV(A) biosynthesis; lipid IV(A) from (3R)-3-hydroxytetradecanoyl-[acyl-carrier-protein] and UDP-N-acetyl-alpha-D-glucosamine: step 1/6. Its function is as follows. Involved in the biosynthesis of lipid A, a phosphorylated glycolipid that anchors the lipopolysaccharide to the outer membrane of the cell. In Chlamydia caviae (strain ATCC VR-813 / DSM 19441 / 03DC25 / GPIC) (Chlamydophila caviae), this protein is Acyl-[acyl-carrier-protein]--UDP-N-acetylglucosamine O-acyltransferase.